Here is a 495-residue protein sequence, read N- to C-terminus: Glutamate--tRNA ligase (495 aa).

Residues proline 12–asparagine 22 carry the 'HIGH' region motif. Residues lysine 259–arginine 263 carry the 'KMSKS' region motif. Lysine 262 contacts ATP.

This sequence belongs to the class-I aminoacyl-tRNA synthetase family. Glutamate--tRNA ligase type 1 subfamily. In terms of assembly, monomer.

It is found in the cytoplasm. It catalyses the reaction tRNA(Glu) + L-glutamate + ATP = L-glutamyl-tRNA(Glu) + AMP + diphosphate. Catalyzes the attachment of glutamate to tRNA(Glu) in a two-step reaction: glutamate is first activated by ATP to form Glu-AMP and then transferred to the acceptor end of tRNA(Glu). The polypeptide is Glutamate--tRNA ligase (Pediococcus pentosaceus (strain ATCC 25745 / CCUG 21536 / LMG 10740 / 183-1w)).